Here is a 377-residue protein sequence, read N- to C-terminus: Nitric oxide reductase FlRd-NAD(+) reductase (377 aa).

The protein belongs to the FAD-dependent oxidoreductase family. FAD serves as cofactor.

It is found in the cytoplasm. It carries out the reaction 2 reduced [nitric oxide reductase rubredoxin domain] + NAD(+) + H(+) = 2 oxidized [nitric oxide reductase rubredoxin domain] + NADH. It functions in the pathway nitrogen metabolism; nitric oxide reduction. One of at least two accessory proteins for anaerobic nitric oxide (NO) reductase. Reduces the rubredoxin moiety of NO reductase. The chain is Nitric oxide reductase FlRd-NAD(+) reductase from Salmonella typhimurium (strain LT2 / SGSC1412 / ATCC 700720).